Consider the following 666-residue polypeptide: MICTECENDAFDEEDDGYYYCQRCGVQVENLIQTGVDDGDLIGEGGGTQGALYNPKHRRTEPQPITPSQPRFTDDTSRYSQFKSQFESENGNKELPREVKRAPDSYVDKEPTEPVDFAAETLSYENYYDEARDRYVKAFLMMITYQCDALVDKFNVTPLIIGLVGPISLRYVALSGVYHKDWANNAIRDSEHQSEDGEVKDAKRLKRHKAEPRNIDGKRAVTIWFGILKKTMPLSSSLVISFLACHQAGAPVLPTDIVRWAREGKLPYLSCFLDIREQMGERSAACPVKVSIMARPFQVISAQMLEARASVIADTIGLPLPPVNFYGIASNYIKQLSIPEDKILDLARLIQNWSLPPELYLSTNEQKLPSRVCVMSILIVAIRMLYNINGLGVWERSLGFVNASDGDSETNSGTAEKATEFDTQELLKNLEAKYHEVAAETLESEKDLVSYLSLGKNEFFAGLEEDSPDDTYRIVDNLWNGYPKDEDIECLPKRGRDWDDDVSLNQLSLYDSRFSDGNNPCSSSSRRNESVSIGLDLSSSEHRESSSPEKLKEIAIKRLITDMGDDLFCYIPPRVKVKRLDYLQYVRKKEDGALIYAAHADYYILLRVCAKVAEIDVRNMHRGVLSFERRLAWIEKRIDQVLHLTRPLMTCKHCCDDGNIGEDQDD.

The RRN7-type zinc finger occupies 1-29; it reads MICTECENDAFDEEDDGYYYCQRCGVQVE. Residues Cys-3, Cys-6, Cys-21, and Cys-24 each contribute to the Zn(2+) site. A B-reader region spans residues 30-64; the sequence is NLIQTGVDDGDLIGEGGGTQGALYNPKHRRTEPQP. 2 disordered regions span residues 45–110 and 189–208; these read GGGT…VDKE and DSEH…LKRH. Positions 65-80 are B-linker; the sequence is ITPSQPRFTDDTSRYS. Residues 78-89 are compositionally biased toward polar residues; the sequence is RYSQFKSQFESE. The tract at residues 81–285 is N-terminal cyclin fold; the sequence is QFKSQFESEN…REQMGERSAA (205 aa). 2 stretches are compositionally biased toward basic and acidic residues: residues 90–110 and 189–202; these read NGNK…VDKE and DSEH…VKDA. The C-terminal cyclin fold stretch occupies residues 286 to 288; it reads CPV. The disordered stretch occupies residues 515 to 548; the sequence is SDGNNPCSSSSRRNESVSIGLDLSSSEHRESSSP. Over residues 539-548 the composition is skewed to basic and acidic residues; that stretch reads SSEHRESSSP.

The protein belongs to the RRN7/TAF1B family. As to quaternary structure, interacts with TFIIF. Interacts with MEE14/CBP1, TBP1 and NRPB1 (via CTD). In terms of tissue distribution, expressed at high levels in seedlings, inflorescences and young siliques and at lower levels in roots. Not detected in leaves and stems. Detected in root tips and shoot apical meristems, in anthers, primarily in microspores with weaker expression in mature pollen grains and in the central cell of the mature female gametophyte. Not expressed in synergids, egg cells, antipodal cells, endosperm cells and fertilized egg cells.

It localises to the nucleus. The protein localises to the nucleolus. In terms of biological role, component of RNA polymerase I core factor complex that acts as a GTF2B/TFIIB-like factor and plays a key role in multiple steps during transcription initiation such as pre-initiation complex (PIC) assembly and postpolymerase recruitment events in polymerase I (Pol I) transcription. Binds rDNA promoters and plays a role in Pol I recruitment. Required for the development of the one-cell zygote and endosperm in embryos. Required for micropylar pollen tube guidance, but has no effect on ovule development and gametophytic cell fate specification. May regulate the transcription of secreted cysteine-rich peptide (CRP) genes in the embryo sac. In Arabidopsis thaliana (Mouse-ear cress), this protein is TATA box-binding protein-associated factor RNA polymerase I subunit B.